The following is a 544-amino-acid chain: Membrane protein insertase YidC (544 aa).

The segment at 29–58 (TPKADPSATTQTLNPTSSESEDYVPTSSDS) is disordered. Over residues 35 to 46 (SATTQTLNPTSS) the composition is skewed to polar residues. A run of 3 helical transmembrane segments spans residues 341–361 (FVLLKWLHSILGNWGVAIIAI), 421–441 (GGCFPILLQMPIFLALFYVFL), and 499–519 (PVIFSVFFLWFPSGLVLYWLV).

It belongs to the OXA1/ALB3/YidC family. Type 1 subfamily. Interacts with the Sec translocase complex via SecD. Specifically interacts with transmembrane segments of nascent integral membrane proteins during membrane integration.

The protein localises to the cell inner membrane. Required for the insertion and/or proper folding and/or complex formation of integral membrane proteins into the membrane. Involved in integration of membrane proteins that insert both dependently and independently of the Sec translocase complex, as well as at least some lipoproteins. Aids folding of multispanning membrane proteins. The polypeptide is Membrane protein insertase YidC (Pseudoalteromonas translucida (strain TAC 125)).